The chain runs to 220 residues: Guanylate kinase (220 aa).

Residues 3–180 form the Guanylate kinase-like domain; that stretch reads GRLFVMTGAS…AVADFLAILT (178 aa). 10 to 17 contributes to the ATP binding site; it reads GASGVGKG.

Belongs to the guanylate kinase family.

It localises to the cytoplasm. The catalysed reaction is GMP + ATP = GDP + ADP. Essential for recycling GMP and indirectly, cGMP. This chain is Guanylate kinase, found in Thermus thermophilus (strain ATCC BAA-163 / DSM 7039 / HB27).